We begin with the raw amino-acid sequence, 524 residues long: Chromosomal replication initiator protein DnaA (524 aa).

A domain I, interacts with DnaA modulators region spans residues 1-85; the sequence is MSQNSSSLLE…TRVLSLRMGR (85 aa). The segment at 85–182 is domain II; the sequence is RSFSLAVSVE…TPAHNPNREV (98 aa). The segment at 95–183 is disordered; it reads PEQEIPETPA…PAHNPNREVS (89 aa). Positions 148–158 are enriched in pro residues; that stretch reads APEPHPAPIAD. The domain III, AAA+ region stretch occupies residues 183–399; sequence SLNPKYTFES…GALIRVSAYS (217 aa). ATP-binding residues include glycine 227, glycine 229, lysine 230, and threonine 231. The domain IV, binds dsDNA stretch occupies residues 400-524; that stretch reads SLINQPIDKE…TQLIKSRGRN (125 aa).

The protein belongs to the DnaA family. In terms of assembly, oligomerizes as a right-handed, spiral filament on DNA at oriC.

Its subcellular location is the cytoplasm. In terms of biological role, plays an essential role in the initiation and regulation of chromosomal replication. ATP-DnaA binds to the origin of replication (oriC) to initiate formation of the DNA replication initiation complex once per cell cycle. Binds the DnaA box (a 9 base pair repeat at the origin) and separates the double-stranded (ds)DNA. Forms a right-handed helical filament on oriC DNA; dsDNA binds to the exterior of the filament while single-stranded (ss)DNA is stabiized in the filament's interior. The ATP-DnaA-oriC complex binds and stabilizes one strand of the AT-rich DNA unwinding element (DUE), permitting loading of DNA polymerase. After initiation quickly degrades to an ADP-DnaA complex that is not apt for DNA replication. Binds acidic phospholipids. The polypeptide is Chromosomal replication initiator protein DnaA (Corynebacterium glutamicum (strain ATCC 13032 / DSM 20300 / JCM 1318 / BCRC 11384 / CCUG 27702 / LMG 3730 / NBRC 12168 / NCIMB 10025 / NRRL B-2784 / 534)).